A 322-amino-acid chain; its full sequence is 4-hydroxy-3-methylbut-2-enyl diphosphate reductase (322 aa).

Cys-15 serves as a coordination point for [4Fe-4S] cluster. (2E)-4-hydroxy-3-methylbut-2-enyl diphosphate-binding residues include His-44 and His-77. The dimethylallyl diphosphate site is built by His-44 and His-77. His-44 and His-77 together coordinate isopentenyl diphosphate. Cys-99 contributes to the [4Fe-4S] cluster binding site. His-127 contributes to the (2E)-4-hydroxy-3-methylbut-2-enyl diphosphate binding site. His-127 lines the dimethylallyl diphosphate pocket. His-127 contacts isopentenyl diphosphate. Residue Glu-129 is the Proton donor of the active site. Thr-168 lines the (2E)-4-hydroxy-3-methylbut-2-enyl diphosphate pocket. Cys-198 contributes to the [4Fe-4S] cluster binding site. (2E)-4-hydroxy-3-methylbut-2-enyl diphosphate is bound by residues Ser-226, Ser-227, Asn-228, and Ser-270. Residues Ser-226, Ser-227, Asn-228, and Ser-270 each contribute to the dimethylallyl diphosphate site. Residues Ser-226, Ser-227, Asn-228, and Ser-270 each coordinate isopentenyl diphosphate.

This sequence belongs to the IspH family. Requires [4Fe-4S] cluster as cofactor.

It catalyses the reaction isopentenyl diphosphate + 2 oxidized [2Fe-2S]-[ferredoxin] + H2O = (2E)-4-hydroxy-3-methylbut-2-enyl diphosphate + 2 reduced [2Fe-2S]-[ferredoxin] + 2 H(+). It carries out the reaction dimethylallyl diphosphate + 2 oxidized [2Fe-2S]-[ferredoxin] + H2O = (2E)-4-hydroxy-3-methylbut-2-enyl diphosphate + 2 reduced [2Fe-2S]-[ferredoxin] + 2 H(+). Its pathway is isoprenoid biosynthesis; dimethylallyl diphosphate biosynthesis; dimethylallyl diphosphate from (2E)-4-hydroxy-3-methylbutenyl diphosphate: step 1/1. The protein operates within isoprenoid biosynthesis; isopentenyl diphosphate biosynthesis via DXP pathway; isopentenyl diphosphate from 1-deoxy-D-xylulose 5-phosphate: step 6/6. Catalyzes the conversion of 1-hydroxy-2-methyl-2-(E)-butenyl 4-diphosphate (HMBPP) into a mixture of isopentenyl diphosphate (IPP) and dimethylallyl diphosphate (DMAPP). Acts in the terminal step of the DOXP/MEP pathway for isoprenoid precursor biosynthesis. The chain is 4-hydroxy-3-methylbut-2-enyl diphosphate reductase from Neisseria meningitidis serogroup C (strain 053442).